The chain runs to 374 residues: RNA polymerase sigma factor SigA (374 aa).

The interval 141–211 (LAEANLRLVV…TRAIADQART (71 aa)) is sigma-70 factor domain-2. Residues 165-168 (DLIQ) carry the Interaction with polymerase core subunit RpoC motif. Residues 220-296 (ETINKLIRVQ…DQDATSPSDH (77 aa)) are sigma-70 factor domain-3. Residues 309-362 (VLDTLTDREENVLRLRFGLDDGRTRTLEEVGRVFGVTRERIRQIEAKALRKLRH) form a sigma-70 factor domain-4 region. The segment at residues 335 to 354 (LEEVGRVFGVTRERIRQIEA) is a DNA-binding region (H-T-H motif).

This sequence belongs to the sigma-70 factor family. RpoD/SigA subfamily. As to quaternary structure, interacts transiently with the RNA polymerase catalytic core.

Its subcellular location is the cytoplasm. Sigma factors are initiation factors that promote the attachment of RNA polymerase to specific initiation sites and are then released. This sigma factor is the primary sigma factor during exponential growth. The polypeptide is RNA polymerase sigma factor SigA (Listeria innocua serovar 6a (strain ATCC BAA-680 / CLIP 11262)).